An 82-amino-acid polypeptide reads, in one-letter code: Small ribosomal subunit protein eS27A (82 aa).

A C4-type zinc finger spans residues 37–59; that stretch reads CPGCLNITTVFSHAQTAVTCESC. The residue at position 40 (Cys40) is an S-methylcysteine.

The protein belongs to the eukaryotic ribosomal protein eS27 family. As to quaternary structure, component of the small ribosomal subunit (SSU). Mature yeast ribosomes consist of a small (40S) and a large (60S) subunit. The 40S small subunit contains 1 molecule of ribosomal RNA (18S rRNA) and 33 different proteins (encoded by 57 genes). The large 60S subunit contains 3 rRNA molecules (25S, 5.8S and 5S rRNA) and 46 different proteins (encoded by 81 genes). Zn(2+) serves as cofactor. Post-translationally, the N-terminus is not modified.

The protein resides in the cytoplasm. Functionally, component of the ribosome, a large ribonucleoprotein complex responsible for the synthesis of proteins in the cell. The small ribosomal subunit (SSU) binds messenger RNAs (mRNAs) and translates the encoded message by selecting cognate aminoacyl-transfer RNA (tRNA) molecules. The large subunit (LSU) contains the ribosomal catalytic site termed the peptidyl transferase center (PTC), which catalyzes the formation of peptide bonds, thereby polymerizing the amino acids delivered by tRNAs into a polypeptide chain. The nascent polypeptides leave the ribosome through a tunnel in the LSU and interact with protein factors that function in enzymatic processing, targeting, and the membrane insertion of nascent chains at the exit of the ribosomal tunnel. The polypeptide is Small ribosomal subunit protein eS27A (Saccharomyces cerevisiae (strain ATCC 204508 / S288c) (Baker's yeast)).